We begin with the raw amino-acid sequence, 239 residues long: Ribose-5-phosphate isomerase A (239 aa).

Substrate is bound by residues Ser-30 to Thr-33, Asp-87 to Asp-90, and Lys-100 to Gly-103. Glu-109 (proton acceptor) is an active-site residue. Position 127 (Lys-127) interacts with substrate.

This sequence belongs to the ribose 5-phosphate isomerase family. In terms of assembly, homodimer.

The catalysed reaction is aldehydo-D-ribose 5-phosphate = D-ribulose 5-phosphate. It participates in carbohydrate degradation; pentose phosphate pathway; D-ribose 5-phosphate from D-ribulose 5-phosphate (non-oxidative stage): step 1/1. Catalyzes the reversible conversion of ribose-5-phosphate to ribulose 5-phosphate. This chain is Ribose-5-phosphate isomerase A, found in Synechococcus sp. (strain CC9605).